Here is a 336-residue protein sequence, read N- to C-terminus: Vacuolar protein sorting-associated protein 26B (336 aa).

Residues S302, S304, and S319 each carry the phosphoserine modification.

This sequence belongs to the VPS26 family. Component of the heterotrimeric retromer cargo-selective complex (CSC), also described as vacuolar protein sorting VPS subcomplex (VPS,) formed by VPS26 (VPS26A or VPS26B), VPS29 and VPS35. The CSC has a highly elongated structure with VPS26 and VPS29 binding independently at opposite distal ends of VPS35 as central platform. The CSC is believed to associate with variable sorting nexins to form functionally distinct retromer complex variants. The originally described retromer complex (also called SNX-BAR retromer) is a pentamer containing the CSC and a heterodimeric membrane-deforming subcomplex formed between SNX1 or SNX2 and SNX5 or SNX6 (also called SNX-BAR subcomplex); the respective CSC and SNX-BAR subcomplexes associate with low affinity. The CSC associates with SNX3 to form a SNX3-retromer complex. The CSC associates with SNX27, the WASH complex and the SNX-BAR subcomplex to form the SNX27-retromer complex. Interacts with VPS29, VPS35, TBC1D5, GOLPH3, SNX27.

The protein resides in the cytoplasm. It localises to the membrane. It is found in the early endosome. Its subcellular location is the late endosome. Functionally, acts as a component of the retromer cargo-selective complex (CSC). The CSC is believed to be the core functional component of retromer or respective retromer complex variants acting to prevent missorting of selected transmembrane cargo proteins into the lysosomal degradation pathway. The recruitment of the CSC to the endosomal membrane involves RAB7A and SNX3. The SNX-BAR retromer mediates retrograde transport of cargo proteins from endosomes to the trans-Golgi network (TGN) and is involved in endosome-to-plasma membrane transport for cargo protein recycling. The SNX3-retromer mediates the retrograde transport of WLS distinct from the SNX-BAR retromer pathway. The SNX27-retromer is believed to be involved in endosome-to-plasma membrane trafficking and recycling of a broad spectrum of cargo proteins. The CSC seems to act as recruitment hub for other proteins, such as the WASH complex and TBC1D5. May be involved in retrograde transport of SORT1 but not of IGF2R. Acts redundantly with VSP26A in SNX-27 mediated endocytic recycling of SLC2A1/GLUT1. The polypeptide is Vacuolar protein sorting-associated protein 26B (VPS26B) (Homo sapiens (Human)).